The chain runs to 185 residues: Translation initiation factor IF-3 (185 aa).

It belongs to the IF-3 family. In terms of assembly, monomer.

The protein resides in the cytoplasm. Its function is as follows. IF-3 binds to the 30S ribosomal subunit and shifts the equilibrium between 70S ribosomes and their 50S and 30S subunits in favor of the free subunits, thus enhancing the availability of 30S subunits on which protein synthesis initiation begins. In Rickettsia typhi (strain ATCC VR-144 / Wilmington), this protein is Translation initiation factor IF-3.